A 526-amino-acid chain; its full sequence is Delayed-rectifier potassium channel regulatory subunit KCNS1 (526 aa).

The Cytoplasmic segment spans residues 1-217; sequence MLMLLVRGTH…LTMENPGYSL (217 aa). The helical transmembrane segment at 218–239 threads the bilayer; the sequence is PSKLFSCVSISVVLASIAAMCI. Over 240–270 the chain is Extracellular; the sequence is HSLPEYQAREAAAAVAAVAAGRSPEGVRDDP. Residues 271 to 293 form a helical membrane-spanning segment; sequence VLRRLEYFCIAWFSFEVSSRLLL. Residues 294–304 lie on the Cytoplasmic side of the membrane; the sequence is APSTRNFFCHP. A helical membrane pass occupies residues 305–322; the sequence is LNLIDIVSVLPFYLTLLA. At 323-337 the chain is on the extracellular side; it reads GVALGDQGGKEFGHL. A helical; Voltage-sensor transmembrane segment spans residues 338–358; it reads GKVVQVFRLMRIFRVLKLARH. Topologically, residues 359-373 are cytoplasmic; the sequence is STGLRSLGATLKHSY. The chain crosses the membrane as a helical span at residues 374–395; that stretch reads REVGILLLYLAVGVSVFSGVAY. Topologically, residues 396–408 are extracellular; it reads TAEKEEDVGFNTI. The segment at residues 409–420 is an intramembrane region (helical); it reads PACWWWGTVSMT. The Selectivity filter signature appears at 421-426; that stretch reads TVGYGD. Residues 421–428 lie within the membrane without spanning it; it reads TVGYGDVV. The Extracellular portion of the chain corresponds to 429–435; the sequence is PVTVAGK. A helical membrane pass occupies residues 436–464; it reads LAASGCILGGILVVALPITIIFNKFSHFY. Over 465–526 the chain is Cytoplasmic; sequence RRQKALEAAV…PSEPPHPQRY (62 aa). The segment at 492–526 is disordered; sequence VSEASLETSGETSQEGRSADLESQAPSEPPHPQRY. The span at 496 to 507 shows a compositional bias: polar residues; the sequence is SLETSGETSQEG.

This sequence belongs to the potassium channel family. S (TC 1.A.1.2) subfamily. Kv9.1/KCNS1 sub-subfamily. In terms of assembly, heterotetramer with KCNB1. Heterotetramer with KCNB2. Does not form homomultimers.

It localises to the cell membrane. In terms of biological role, potassium channel regulatory subunit that modulate the delayed rectifier voltage-gated potassium channel activity of KCNB1 and KCNB2 by altering their kinetics, expression levels, and shifting the half-inactivation potential to more polarized values. While it does not form functional channels on its own, it can form functional heterotetrameric channels with KCNB1 and KCNB2. Each regulatory subunit has unique regulatory properties that can lead to extensive inhibition, significant changes in kinetics, and/or substantial shifts in the voltage dependencies of the inactivation process. This is Delayed-rectifier potassium channel regulatory subunit KCNS1 from Gorilla gorilla gorilla (Western lowland gorilla).